The following is a 429-amino-acid chain: Serine hydroxymethyltransferase (429 aa).

(6S)-5,6,7,8-tetrahydrofolate is bound by residues Leu-130 and Gly-134–Leu-136. Lys-239 bears the N6-(pyridoxal phosphate)lysine mark.

Belongs to the SHMT family. Homodimer. It depends on pyridoxal 5'-phosphate as a cofactor.

The protein resides in the cytoplasm. The catalysed reaction is (6R)-5,10-methylene-5,6,7,8-tetrahydrofolate + glycine + H2O = (6S)-5,6,7,8-tetrahydrofolate + L-serine. The protein operates within one-carbon metabolism; tetrahydrofolate interconversion. Its pathway is amino-acid biosynthesis; glycine biosynthesis; glycine from L-serine: step 1/1. In terms of biological role, catalyzes the reversible interconversion of serine and glycine with tetrahydrofolate (THF) serving as the one-carbon carrier. This reaction serves as the major source of one-carbon groups required for the biosynthesis of purines, thymidylate, methionine, and other important biomolecules. Also exhibits THF-independent aldolase activity toward beta-hydroxyamino acids, producing glycine and aldehydes, via a retro-aldol mechanism. The polypeptide is Serine hydroxymethyltransferase (Phenylobacterium zucineum (strain HLK1)).